A 1021-amino-acid chain; its full sequence is Inversin (1021 aa).

ANK repeat units follow at residues 7–36 (QNPSQVHAAAVNGDKNTLHKLITESALRDS), 40–69 (FGRTPLMYCVLADRLDCAEVLLKAGAGINK), 73–102 (SQRTALHLAAQKGNVRFMKLLLSRHADWRL), 106–137 (EEMTPLHLASRHSSSKPLSLLLKHMAPGEVDT), 141–170 (NKQTALHWSAFYNHPEHVKLLIKHDSNIGI), 174–206 (EGKIPLHWAAHNKHPNATRTVRCILEAAPTESL), 213–243 (EGRTPLHFAVADGNEAVVEVLTSYEGCSVTA), 247–276 (LFRTPLHWAALLGHAKIVHLLLERNKSGMI), 281–310 (QGATPLHYGAQSNFADTVAVFLKHHSVRDE), 314–343 (EGRTAFMWAAGKGSNDVIKIMLDLKKDIDI), 349–378 (YGGTALHAAALSGHVSTVRLLLEQGGMVDP), 382–411 (MKHTPLFRACEMGHRDVILTLIKGGARVDL), 415–444 (DGHSALHWAALGGNAEVCEVLMENGISPNL), 448–477 (AGRTPLQCAAYAGYINCMALLIQHDADPNI), 481–510 (EGRTALHWSCNNGYLDAVKLLLGCGAFPNH), and 516–546 (ERYTPLDYALLGEHQELTQFLLEHGALSIAA). Positions 483-491 (RTALHWSCN) match the D-box 1 motif. The 30-residue stretch at 548-577 (QDIAASSIQALYKGYKVRRAFRERKKLLMR) folds into the IQ 1 domain. Basic and acidic residues-rich tracts occupy residues 579 to 598 (EQLRKDAAKKREEERRREAE) and 653 to 669 (SRREKPSRAERRTREPE). Disordered regions lie at residues 579 to 602 (EQLRKDAAKKREEERRREAEQQLS), 632 to 691 (KDSV…KKCP), and 704 to 868 (GPDT…GTCS). Positions 722–731 (PAGSSRPGSA) are enriched in low complexity. Composition is skewed to polar residues over residues 759–781 (GAHSKNASQDTPQHNETQTTSKG) and 791–802 (TGSQPSNNTSVT). The segment covering 803–866 (RQKEKRQEKE…KEKEKKKDGT (64 aa)) has biased composition (basic and acidic residues). The D-box 2 signature appears at 862 to 870 (KKDGTCSKN). An IQ 2 domain is found at 869-898 (KNQAAVVIQRAWRRSCVRGRIRKVLCRSLK).

In terms of assembly, binds calmodulin via its IQ domains.

It is found in the cytoplasm. Its subcellular location is the cytoskeleton. Functionally, required for normal renal development and establishment of left-right axis. Probably acts as a molecular switch between different Wnt signaling pathways. Inhibits the canonical Wnt pathway by targeting cytoplasmic disheveled for degradation by the ubiquitin-proteasome. This suggests that it is required in renal development to oppose the repression of terminal differentiation of tubular epithelial cells by Wnt signaling. This is Inversin (invs) from Danio rerio (Zebrafish).